The sequence spans 329 residues: Synaptonemal complex central element protein 1 (329 aa).

The interval 1–33 (MATRPQPLSVEPEGSADLLHGPEGARGRRGSTQ) is disordered. 2 coiled-coil regions span residues 28-168 (RRGS…ETLM) and 194-294 (KEQL…ILAQ). The interval 295 to 329 (IQSTQKEEDSSWRTASPKPLEAHKETVQERPSSRT) is disordered. The span at 314–329 (LEAHKETVQERPSSRT) shows a compositional bias: basic and acidic residues.

Belongs to the SYCE family. In terms of assembly, homodimer. Found in a complex with SYCP1 and SYCE2. Interacts with SYCP1, SYCE2 and SYCE3. Interacts with SIX6OS1.

It localises to the nucleus. Its subcellular location is the chromosome. In terms of biological role, major component of the transverse central element of synaptonemal complexes (SCS), formed between homologous chromosomes during meiotic prophase. Requires SYCP1 in order to be incorporated into the central element. May have a role in the synaptonemal complex assembly, stabilization and recombination. This chain is Synaptonemal complex central element protein 1 (Syce1), found in Rattus norvegicus (Rat).